A 454-amino-acid polypeptide reads, in one-letter code: MTTSERRYHITTFGCQMNKADSERMAGILEDIGYQWSDDPNEADLVLYNTCTIRDNAEQKVYSYLGRQAKRKHEKPDLTLIVAGCVAQQEGEKLLRRVPELDLVMGPQHANRLQDLLQEVLAGNQVVATEPIHIVEDITKPRRESTVTAWVNVIYGCNERCTYCVVPNVRGVEQSRTPQAIRAEMVELGQQGYKEITLLGQNIDAYGRDLPGVTESGRHQHTLTDLLYYVNDVPGIERIRFATSHPRYFTERLIVACKELPKVCEHFHIPFQSGDNDLLKAMKRGYTHERYRQIIDKIREYMPDASISADAIVGFPGETEAQFENTLKLVEDIGFDQLNTAAYSPRPGTPAALWDNQLSEEVKSDRLQRLNHLVAIKAAERSQRYLGRIEEVLVEDVNPKDLTQVMGRTRGNRLTFFTGDINQLKGQLVEVKITDVRAFSLTGEPVKILSTSLS.

The MTTase N-terminal domain maps to 6 to 122 (RRYHITTFGC…LQDLLQEVLA (117 aa)). Residues Cys-15, Cys-51, Cys-85, Cys-157, Cys-161, and Cys-164 each contribute to the [4Fe-4S] cluster site. The 238-residue stretch at 143–380 (RESTVTAWVN…NHLVAIKAAE (238 aa)) folds into the Radical SAM core domain. One can recognise a TRAM domain in the interval 383–447 (QRYLGRIEEV…AFSLTGEPVK (65 aa)).

It belongs to the methylthiotransferase family. MiaB subfamily. Monomer. Requires [4Fe-4S] cluster as cofactor.

The protein resides in the cytoplasm. It catalyses the reaction N(6)-dimethylallyladenosine(37) in tRNA + (sulfur carrier)-SH + AH2 + 2 S-adenosyl-L-methionine = 2-methylsulfanyl-N(6)-dimethylallyladenosine(37) in tRNA + (sulfur carrier)-H + 5'-deoxyadenosine + L-methionine + A + S-adenosyl-L-homocysteine + 2 H(+). Its function is as follows. Catalyzes the methylthiolation of N6-(dimethylallyl)adenosine (i(6)A), leading to the formation of 2-methylthio-N6-(dimethylallyl)adenosine (ms(2)i(6)A) at position 37 in tRNAs that read codons beginning with uridine. This chain is tRNA-2-methylthio-N(6)-dimethylallyladenosine synthase, found in Gloeothece citriformis (strain PCC 7424) (Cyanothece sp. (strain PCC 7424)).